Consider the following 339-residue polypeptide: MMPFCHNIINISCVKNNWSNDVRASLYSLMVLIILTTLVGNLIVIVSISHFKQLHTPTNWLIHSMATVDFLLGCLVMPYSMVRSAEHCWYFGEVFCKIHTSTDIMLSSASIFHLSFISIDRYYAVCDPLRYKAKMNILVICVMIFISWSVPAVFAFGMIFLELNFKGAEEIYYKHVHCRGGCSVFFSKISGVLTFMTSFYIPGSIMLCVYYRIYLIAKEQARLISDANQKLQIGLEMKNGISQSKERKAVKTLGIVMGVFLICWCPFFICTVMDPFLHYIIPPTLNDVLIWFGYLNSTFNPMVYAFFYPWFRKALKMMLFGKIFQKDSSRCKLFLELSS.

Residues 1–24 (MMPFCHNIINISCVKNNWSNDVRA) are Extracellular-facing. Cystine bridges form between Cys-5-Cys-178, Cys-13-Cys-88, and Cys-96-Cys-182. 2 N-linked (GlcNAc...) asparagine glycosylation sites follow: Asn-10 and Asn-17. A helical transmembrane segment spans residues 25 to 49 (SLYSLMVLIILTTLVGNLIVIVSIS). The Cytoplasmic segment spans residues 50-59 (HFKQLHTPTN). A helical membrane pass occupies residues 60–81 (WLIHSMATVDFLLGCLVMPYSM). Residues 82–96 (VRSAEHCWYFGEVFC) lie on the Extracellular side of the membrane. Residues 97–119 (KIHTSTDIMLSSASIFHLSFISI) traverse the membrane as a helical segment. Residue Asp-103 coordinates 2-phenylethylamine. Over 120 to 139 (DRYYAVCDPLRYKAKMNILV) the chain is Cytoplasmic. Residues 140-161 (ICVMIFISWSVPAVFAFGMIFL) traverse the membrane as a helical segment. Topologically, residues 162–188 (ELNFKGAEEIYYKHVHCRGGCSVFFSK) are extracellular. An extracellular Loop 2 (ECL2) region spans residues 175-186 (HVHCRGGCSVFF). The chain crosses the membrane as a helical span at residues 189 to 211 (ISGVLTFMTSFYIPGSIMLCVYY). The Cytoplasmic portion of the chain corresponds to 212–249 (RIYLIAKEQARLISDANQKLQIGLEMKNGISQSKERKA). The helical transmembrane segment at 250 to 273 (VKTLGIVMGVFLICWCPFFICTVM) threads the bilayer. The Extracellular portion of the chain corresponds to 274–286 (DPFLHYIIPPTLN). A helical membrane pass occupies residues 287-307 (DVLIWFGYLNSTFNPMVYAFF). Residues 308 to 339 (YPWFRKALKMMLFGKIFQKDSSRCKLFLELSS) lie on the Cytoplasmic side of the membrane.

This sequence belongs to the G-protein coupled receptor 1 family. In terms of tissue distribution, expressed at low level in both the central and peripheral nervous system. Moderately expressed in stomach. Low levels in amygdala, kidney, and lung, and small intestine. Trace amounts in cerebellum, dorsal root ganglia, hippocampus, hypothalamus, liver, medulla, pancreas, pituitary, pontine reticular formation, prostate, skeletal muscle and spleen.

It is found in the endomembrane system. It localises to the endoplasmic reticulum membrane. Its subcellular location is the cell membrane. Activated by SEP-363856 small molecule: IHCH-7179 acts both as an agonist activator for HTR1A and TAAR1. Its function is as follows. Intracellular G-protein coupled receptor for trace amines, which recognizes endogenous amine-containing metabolites such as beta-phenylethylamine (beta-PEA), 3-iodothyronamine (T1AM), isoamylamine (IAA), cadaverine (CAD), cyclohexylamine (CHA), p-tyramine (p-TYR), trimethylamine (TMA), octopamine and tryptamine. Also functions as a receptor for various drugs and psychoactive substances, such as amphetamine and methamphetamine. Unresponsive to classical biogenic amines, such as epinephrine and histamine and only partially activated by dopamine and serotonin. Expressed in both the central and peripheral nervous system: TAAR1 activation regulates the activity of several neurotransmitter signaling pathways by (1) decreasing the basal firing rates of the neurons involved and by (2) lowering the sensitivity of receptors to neurotransmitters. Ligand binding causes a conformation change that triggers signaling via guanine nucleotide-binding proteins (G proteins) and modulates the activity of downstream effectors. TAAR1 is coupled with different G(i)/G(o)-, G(s)- or G(q)/G(11) classes of G alpha proteins depending on the ligand. CAD-binding is coupled to G(i)/G(o) G alpha proteins and mediates inhibition of adenylate cyclase activity. T1AM- or beta-PEA-binding is coupled to G(s) G alpha proteins and mediates activation of adenylate cyclase activity. CHA- or IAA-binding is coupled to G(q)/G(11) G alpha proteins and activates phospholipase C-beta, releasing diacylglycerol (DAG) and inositol 1,4,5-trisphosphate (IP3) second messengers. TMA-binding is coupled with all three G(i)/G(o)-, G(s)- or G(q)/G(11) G alpha protein subtypes. Amphetamine-binding is coupled with G(s)- or G(12)/G(13) G alpha protein subtypes. This is Trace amine-associated receptor 1 from Homo sapiens (Human).